The following is a 155-amino-acid chain: 6,7-dimethyl-8-ribityllumazine synthase (155 aa).

5-amino-6-(D-ribitylamino)uracil is bound by residues F22, 56-58, and 80-82; these read AFE and AVI. 85–86 is a binding site for (2S)-2-hydroxy-3-oxobutyl phosphate; that stretch reads AT. H88 acts as the Proton donor in catalysis. F113 contributes to the 5-amino-6-(D-ribitylamino)uracil binding site. R127 provides a ligand contact to (2S)-2-hydroxy-3-oxobutyl phosphate.

It belongs to the DMRL synthase family.

The enzyme catalyses (2S)-2-hydroxy-3-oxobutyl phosphate + 5-amino-6-(D-ribitylamino)uracil = 6,7-dimethyl-8-(1-D-ribityl)lumazine + phosphate + 2 H2O + H(+). It participates in cofactor biosynthesis; riboflavin biosynthesis; riboflavin from 2-hydroxy-3-oxobutyl phosphate and 5-amino-6-(D-ribitylamino)uracil: step 1/2. Functionally, catalyzes the formation of 6,7-dimethyl-8-ribityllumazine by condensation of 5-amino-6-(D-ribitylamino)uracil with 3,4-dihydroxy-2-butanone 4-phosphate. This is the penultimate step in the biosynthesis of riboflavin. The chain is 6,7-dimethyl-8-ribityllumazine synthase from Clostridium acetobutylicum (strain ATCC 824 / DSM 792 / JCM 1419 / IAM 19013 / LMG 5710 / NBRC 13948 / NRRL B-527 / VKM B-1787 / 2291 / W).